Consider the following 302-residue polypeptide: Myeloid-associated differentiation marker-like protein 2 (302 aa).

MARVEL domains lie at 13–149 (AIWS…AKPG) and 154–298 (YMAT…RLRI). A run of 7 helical transmembrane segments spans residues 45–65 (AYGT…ILIV), 87–107 (AYAM…PMYF), 124–144 (LAVS…VFLT), 158–178 (ASGL…GALA), 191–211 (WCVA…ILNI), 225–245 (FVVI…VIWP), and 273–293 (LAVT…LIYT).

The protein belongs to the MAL family.

The protein localises to the membrane. This is Myeloid-associated differentiation marker-like protein 2 (myadml2) from Xenopus laevis (African clawed frog).